The following is a 411-amino-acid chain: Tetra-peptide repeat homeobox protein 1 (411 aa).

Positions 3–24 (SLREQQLQVWFKNRRAKLARER) form a DNA-binding region, homeobox. Disordered stretches follow at residues 20–63 (LARE…SGIL), 88–246 (IPAA…ISGP), 286–340 (PILS…SPDA), and 363–411 (LEGS…LLDL). Low complexity predominate over residues 27 to 55 (QQQPQRVPGQRGRGARAAPLVPAASASAP). Composition is skewed to pro residues over residues 95-139 (GPGP…PGPI) and 149-246 (FRGP…ISGP). A compositionally biased stretch (low complexity) spans 295–307 (SPGSLPGLAPILG). A compositionally biased stretch (pro residues) spans 319 to 335 (APIPGPGSLPAPAPLWP). 2 stretches are compositionally biased toward polar residues: residues 366 to 376 (SSVSTMTSQYQ) and 388 to 402 (GSQP…NENH).

This sequence belongs to the paired homeobox family.

Its subcellular location is the nucleus. In terms of biological role, transcription factor expressed after fertilization required for zygotic genome activation (ZGA), a critical event in early embryonic development during which the developmental control passes from maternally provided mRNAs to the expression of the zygotic genome after fertilization. Binds and activates expression of key ZGA marker genes, such as NANOGNB, ZSCAN4, DUXB, KLF5 and DPPA3. Binds to regulatory DNA sequences containing a 5'-TAATCC-3' sequence motif. The protein is Tetra-peptide repeat homeobox protein 1 of Homo sapiens (Human).